Consider the following 148-residue polypeptide: Large ribosomal subunit protein uL15 (148 aa).

The tract at residues 1 to 61 is disordered; it reads MELNELRPAV…GGQMPMQRRL (61 aa). Over residues 30 to 39 the composition is skewed to basic residues; that stretch reads TATKGHKGQK.

It belongs to the universal ribosomal protein uL15 family. As to quaternary structure, part of the 50S ribosomal subunit.

Binds to the 23S rRNA. This chain is Large ribosomal subunit protein uL15, found in Geobacter sulfurreducens (strain ATCC 51573 / DSM 12127 / PCA).